Here is a 212-residue protein sequence, read N- to C-terminus: Octanoyltransferase (212 aa).

One can recognise a BPL/LPL catalytic domain in the interval 31-209; that stretch reads AETQDEIWLV…HFADLLGYNI (179 aa). Substrate is bound by residues 70 to 77, 138 to 140, and 151 to 153; these read RGGQITYH, SLG, and GLA. The active-site Acyl-thioester intermediate is the cysteine 169.

The protein belongs to the LipB family.

The protein resides in the cytoplasm. The enzyme catalyses octanoyl-[ACP] + L-lysyl-[protein] = N(6)-octanoyl-L-lysyl-[protein] + holo-[ACP] + H(+). The protein operates within protein modification; protein lipoylation via endogenous pathway; protein N(6)-(lipoyl)lysine from octanoyl-[acyl-carrier-protein]: step 1/2. Catalyzes the transfer of endogenously produced octanoic acid from octanoyl-acyl-carrier-protein onto the lipoyl domains of lipoate-dependent enzymes. Lipoyl-ACP can also act as a substrate although octanoyl-ACP is likely to be the physiological substrate. The polypeptide is Octanoyltransferase (Haemophilus influenzae (strain PittGG)).